The primary structure comprises 266 residues: Uracil-DNA glycosylase (266 aa).

The disordered stretch occupies residues 1–25 (MTRRADPAQATLFDDDEPAGAPTAT). The Proton acceptor role is filled by Asp-97.

The protein belongs to the uracil-DNA glycosylase (UDG) superfamily. UNG family.

The protein localises to the cytoplasm. The enzyme catalyses Hydrolyzes single-stranded DNA or mismatched double-stranded DNA and polynucleotides, releasing free uracil.. Excises uracil residues from the DNA which can arise as a result of misincorporation of dUMP residues by DNA polymerase or due to deamination of cytosine. This chain is Uracil-DNA glycosylase, found in Ralstonia nicotianae (strain ATCC BAA-1114 / GMI1000) (Ralstonia solanacearum).